The sequence spans 142 residues: Galactose-6-phosphate isomerase subunit LacA (142 aa).

It belongs to the LacAB/RpiB family. Heteromultimeric protein consisting of LacA and LacB.

The enzyme catalyses aldehydo-D-galactose 6-phosphate = keto-D-tagatose 6-phosphate. Its pathway is carbohydrate metabolism; D-galactose 6-phosphate degradation; D-tagatose 6-phosphate from D-galactose 6-phosphate: step 1/1. The protein is Galactose-6-phosphate isomerase subunit LacA of Staphylococcus aureus (strain JH9).